The chain runs to 167 residues: NADH-quinone oxidoreductase subunit B (167 aa).

[4Fe-4S] cluster contacts are provided by Cys40, Cys41, Cys105, and Cys135.

This sequence belongs to the complex I 20 kDa subunit family. NDH-1 is composed of 14 different subunits. Subunits NuoB, C, D, E, F, and G constitute the peripheral sector of the complex. [4Fe-4S] cluster serves as cofactor.

The protein localises to the cell inner membrane. It carries out the reaction a quinone + NADH + 5 H(+)(in) = a quinol + NAD(+) + 4 H(+)(out). Functionally, NDH-1 shuttles electrons from NADH, via FMN and iron-sulfur (Fe-S) centers, to quinones in the respiratory chain. The immediate electron acceptor for the enzyme in this species is believed to be ubiquinone. Couples the redox reaction to proton translocation (for every two electrons transferred, four hydrogen ions are translocated across the cytoplasmic membrane), and thus conserves the redox energy in a proton gradient. The polypeptide is NADH-quinone oxidoreductase subunit B (Magnetococcus marinus (strain ATCC BAA-1437 / JCM 17883 / MC-1)).